The primary structure comprises 546 residues: ATP synthase subunit alpha (546 aa).

172–179 is a binding site for ATP; sequence GDRKTGKT.

It belongs to the ATPase alpha/beta chains family. F-type ATPases have 2 components, CF(1) - the catalytic core - and CF(0) - the membrane proton channel. CF(1) has five subunits: alpha(3), beta(3), gamma(1), delta(1), epsilon(1). CF(0) has three main subunits: a(1), b(2) and c(9-12). The alpha and beta chains form an alternating ring which encloses part of the gamma chain. CF(1) is attached to CF(0) by a central stalk formed by the gamma and epsilon chains, while a peripheral stalk is formed by the delta and b chains.

Its subcellular location is the cell membrane. The catalysed reaction is ATP + H2O + 4 H(+)(in) = ADP + phosphate + 5 H(+)(out). Its function is as follows. Produces ATP from ADP in the presence of a proton gradient across the membrane. The alpha chain is a regulatory subunit. The chain is ATP synthase subunit alpha from Corynebacterium efficiens (strain DSM 44549 / YS-314 / AJ 12310 / JCM 11189 / NBRC 100395).